A 363-amino-acid polypeptide reads, in one-letter code: UDP-N-acetylglucosamine--N-acetylmuramyl-(pentapeptide) pyrophosphoryl-undecaprenol N-acetylglucosamine transferase (363 aa).

UDP-N-acetyl-alpha-D-glucosamine is bound by residues 16–18 (TGG), Asn128, Arg167, Ser195, Ile249, 268–273 (ALTVSE), and Gln294.

The protein belongs to the glycosyltransferase 28 family. MurG subfamily.

The protein localises to the cell inner membrane. It carries out the reaction di-trans,octa-cis-undecaprenyl diphospho-N-acetyl-alpha-D-muramoyl-L-alanyl-D-glutamyl-meso-2,6-diaminopimeloyl-D-alanyl-D-alanine + UDP-N-acetyl-alpha-D-glucosamine = di-trans,octa-cis-undecaprenyl diphospho-[N-acetyl-alpha-D-glucosaminyl-(1-&gt;4)]-N-acetyl-alpha-D-muramoyl-L-alanyl-D-glutamyl-meso-2,6-diaminopimeloyl-D-alanyl-D-alanine + UDP + H(+). It participates in cell wall biogenesis; peptidoglycan biosynthesis. In terms of biological role, cell wall formation. Catalyzes the transfer of a GlcNAc subunit on undecaprenyl-pyrophosphoryl-MurNAc-pentapeptide (lipid intermediate I) to form undecaprenyl-pyrophosphoryl-MurNAc-(pentapeptide)GlcNAc (lipid intermediate II). This is UDP-N-acetylglucosamine--N-acetylmuramyl-(pentapeptide) pyrophosphoryl-undecaprenol N-acetylglucosamine transferase from Marinobacter nauticus (strain ATCC 700491 / DSM 11845 / VT8) (Marinobacter aquaeolei).